Reading from the N-terminus, the 692-residue chain is Elongation factor G (692 aa).

Positions 8–283 (NRIRNIGIAA…AVIDYLPAPT (276 aa)) constitute a tr-type G domain. GTP-binding positions include 17–24 (AHIDAGKT), 81–85 (DTPGH), and 135–138 (NKMD).

It belongs to the TRAFAC class translation factor GTPase superfamily. Classic translation factor GTPase family. EF-G/EF-2 subfamily.

The protein localises to the cytoplasm. In terms of biological role, catalyzes the GTP-dependent ribosomal translocation step during translation elongation. During this step, the ribosome changes from the pre-translocational (PRE) to the post-translocational (POST) state as the newly formed A-site-bound peptidyl-tRNA and P-site-bound deacylated tRNA move to the P and E sites, respectively. Catalyzes the coordinated movement of the two tRNA molecules, the mRNA and conformational changes in the ribosome. In Helicobacter acinonychis (strain Sheeba), this protein is Elongation factor G.